Here is a 415-residue protein sequence, read N- to C-terminus: Gamma-glutamyl phosphate reductase (415 aa).

It belongs to the gamma-glutamyl phosphate reductase family.

It localises to the cytoplasm. It carries out the reaction L-glutamate 5-semialdehyde + phosphate + NADP(+) = L-glutamyl 5-phosphate + NADPH + H(+). It participates in amino-acid biosynthesis; L-proline biosynthesis; L-glutamate 5-semialdehyde from L-glutamate: step 2/2. In terms of biological role, catalyzes the NADPH-dependent reduction of L-glutamate 5-phosphate into L-glutamate 5-semialdehyde and phosphate. The product spontaneously undergoes cyclization to form 1-pyrroline-5-carboxylate. In Bacillus cereus (strain ATCC 10987 / NRS 248), this protein is Gamma-glutamyl phosphate reductase.